Reading from the N-terminus, the 89-residue chain is Small ribosomal subunit protein uS15 (89 aa).

Residues 1-23 form a disordered region; it reads MSLGTEEKQNLINTHQVHPTDTG. The span at 10-23 shows a compositional bias: polar residues; the sequence is NLINTHQVHPTDTG.

This sequence belongs to the universal ribosomal protein uS15 family. Part of the 30S ribosomal subunit. Forms a bridge to the 50S subunit in the 70S ribosome, contacting the 23S rRNA.

Its function is as follows. One of the primary rRNA binding proteins, it binds directly to 16S rRNA where it helps nucleate assembly of the platform of the 30S subunit by binding and bridging several RNA helices of the 16S rRNA. In terms of biological role, forms an intersubunit bridge (bridge B4) with the 23S rRNA of the 50S subunit in the ribosome. The protein is Small ribosomal subunit protein uS15 of Prochlorococcus marinus (strain NATL2A).